The primary structure comprises 513 residues: ATP synthase subunit alpha (513 aa).

169–176 (GDRQCGKT) contributes to the ATP binding site.

The protein belongs to the ATPase alpha/beta chains family. As to quaternary structure, F-type ATPases have 2 components, CF(1) - the catalytic core - and CF(0) - the membrane proton channel. CF(1) has five subunits: alpha(3), beta(3), gamma(1), delta(1), epsilon(1). CF(0) has three main subunits: a(1), b(2) and c(9-12). The alpha and beta chains form an alternating ring which encloses part of the gamma chain. CF(1) is attached to CF(0) by a central stalk formed by the gamma and epsilon chains, while a peripheral stalk is formed by the delta and b chains.

The protein resides in the cell inner membrane. It carries out the reaction ATP + H2O + 4 H(+)(in) = ADP + phosphate + 5 H(+)(out). Functionally, produces ATP from ADP in the presence of a proton gradient across the membrane. The alpha chain is a regulatory subunit. The polypeptide is ATP synthase subunit alpha (Burkholderia orbicola (strain AU 1054)).